The chain runs to 402 residues: Sulfate adenylyltransferase (402 aa).

This sequence belongs to the sulfate adenylyltransferase family.

It catalyses the reaction sulfate + ATP + H(+) = adenosine 5'-phosphosulfate + diphosphate. Its pathway is sulfur metabolism; hydrogen sulfide biosynthesis; sulfite from sulfate: step 1/3. The chain is Sulfate adenylyltransferase from Thiobacillus denitrificans (strain ATCC 25259 / T1).